Here is a 456-residue protein sequence, read N- to C-terminus: Glutamate--tRNA ligase 1 (456 aa).

A 'HIGH' region motif is present at residues 9-19 (PSPTGQIHIGN). The 'KMSKS' region motif lies at 250-254 (GLSKR). K253 contributes to the ATP binding site.

The protein belongs to the class-I aminoacyl-tRNA synthetase family. Glutamate--tRNA ligase type 1 subfamily. Monomer.

It is found in the cytoplasm. It carries out the reaction tRNA(Glu) + L-glutamate + ATP = L-glutamyl-tRNA(Glu) + AMP + diphosphate. Functionally, catalyzes the attachment of glutamate to tRNA(Glu) in a two-step reaction: glutamate is first activated by ATP to form Glu-AMP and then transferred to the acceptor end of tRNA(Glu). In Chelativorans sp. (strain BNC1), this protein is Glutamate--tRNA ligase 1.